The primary structure comprises 128 residues: MKFDTMLAIGIGGFIGAILRAYTAGLVNSAVKHDIPFGTLSVNLIGSLLLGMFIGAIQYGGIQNPYIKSMLTTGMMGAFTTFSTFAVESFFLFKNALYIQALSYILLNVIGCIILAGAGFKGIEAILK.

4 helical membrane passes run 7-27 (LAIG…AGLV), 37-57 (FGTL…IGAI), 73-93 (TGMM…FFLF), and 96-116 (ALYI…IILA). Na(+) is bound by residues Gly77 and Thr80.

It belongs to the fluoride channel Fluc/FEX (TC 1.A.43) family.

The protein resides in the cell inner membrane. The enzyme catalyses fluoride(in) = fluoride(out). Na(+) is not transported, but it plays an essential structural role and its presence is essential for fluoride channel function. Fluoride-specific ion channel. Important for reducing fluoride concentration in the cell, thus reducing its toxicity. In Nautilia profundicola (strain ATCC BAA-1463 / DSM 18972 / AmH), this protein is Fluoride-specific ion channel FluC.